Here is a 29-residue protein sequence, read N- to C-terminus: Trypsin inhibitor 4 (29 aa).

3 disulfides stabilise this stretch: Cys-3–Cys-20, Cys-10–Cys-22, and Cys-16–Cys-28.

This sequence belongs to the protease inhibitor I7 (squash-type serine protease inhibitor) family.

The protein localises to the secreted. Strongly inhibits trypsin, weakly inhibits chymotrypsin. This Cyclanthera pedata (Achocha) protein is Trypsin inhibitor 4.